Here is a 259-residue protein sequence, read N- to C-terminus: GDP-perosamine N-formyltransferase (259 aa).

(6S)-5,6,7,8-tetrahydrofolate-binding positions include 89–91 (SLI) and 139–143 (DENFD).

The protein belongs to the Fmt family. Homodimer.

It catalyses the reaction GDP-alpha-D-perosamine + (6R)-10-formyltetrahydrofolate = GDP-N-formyl-alpha-D-perosamine + (6S)-5,6,7,8-tetrahydrofolate + H(+). It functions in the pathway bacterial outer membrane biogenesis; lipopolysaccharide biosynthesis. In terms of biological role, involved in the lipopolysaccharide (LPS) O-antigen biosynthesis. Catalyzes the transfer of a formyl group to GDP-perosamine, leading to the formation of GDP-N-formylperosamine. Is critical for full bacterial virulence. The protein is GDP-perosamine N-formyltransferase of Brucella abortus (strain 2308).